A 60-amino-acid chain; its full sequence is Large ribosomal subunit protein uL30 (60 aa).

The protein belongs to the universal ribosomal protein uL30 family. In terms of assembly, part of the 50S ribosomal subunit.

The polypeptide is Large ribosomal subunit protein uL30 (Baumannia cicadellinicola subsp. Homalodisca coagulata).